The sequence spans 908 residues: Glutamate receptor ionotropic, kainate 2 (908 aa).

The signal sequence occupies residues 1–31 (MKIISPVLSNLVFSRSIKVLLCLLWIGYSQG). Topologically, residues 32–561 (TTHVLRFGGI…VFSFLNPLSP (530 aa)) are extracellular. N-linked (GlcNAc...) asparagine glycosylation is found at Asn67, Asn73, Asn275, Asn378, Asn412, Asn423, and Asn430. The cysteines at positions 96 and 347 are disulfide-linked. Residues Pro516, Ala518, and Arg523 each coordinate L-glutamate. Residue Asn546 is glycosylated (N-linked (GlcNAc...) asparagine). The helical transmembrane segment at 562 to 582 (DIWMYILLAYLGVSCVLFVIA) threads the bilayer. Over 583-638 (RFSPYEWYNPHPCNPDSDVVENNFTLLNSFWFGVGALMQQGSELMPKALSTRIVGG) the chain is Cytoplasmic. The chain crosses the membrane as a helical span at residues 639–659 (IWWFFTLIIISSYTANLAAFL). Residues 660 to 819 (TVERMESPID…KEASALGVQN (160 aa)) are Extracellular-facing. L-glutamate-binding residues include Ala689, Thr690, and Glu738. Cysteines 750 and 804 form a disulfide. The N-linked (GlcNAc...) asparagine glycan is linked to Asn751. The helical transmembrane segment at 820–840 (IGGIFIVLAAGLVLSVFVAVG) threads the bilayer. Over 841–908 (EFLYKSKKNA…RRLPGKETMA (68 aa)) the chain is Cytoplasmic. Phosphoserine; by PKC is present on residues Ser846 and Ser868. Lys886 participates in a covalent cross-link: Glycyl lysine isopeptide (Lys-Gly) (interchain with G-Cter in SUMO1).

This sequence belongs to the glutamate-gated ion channel (TC 1.A.10.1) family. GRIK2 subfamily. As to quaternary structure, homotetramer and heterotetramer with GRIK5. Tetramers may be formed by the dimerization of dimers. Assembles into a kainate-gated homomeric channel that does not bind AMPA. Can form functional heteromeric receptors with GRIK3. Forms a heteromeric complex with GRIK4 and GRIK5. Interacts with DLG4. Interacts (via C-terminus) with KLHL17 (via kelch repeats); the interaction targets GRIK2 for degradation via ubiquitin-proteasome pathway. Interacts with NETO2. Post-translationally, sumoylation mediates kainate receptor-mediated endocytosis and regulates synaptic transmission. Sumoylation is enhanced by PIAS3 and desumoylated by SENP1. Ubiquitinated. Ubiquitination regulates the GRIK2 levels at the synapse by leading kainate receptor degradation through proteasome. In terms of processing, phosphorylated by PKC at Ser-868 upon agonist activation, this directly enhance sumoylation. In terms of tissue distribution, expressed in the hippocampal mossy fiber synapses (at protein level). Most abundant in the cerebellum and the hypothalamus. Expressed in a proportion of dorsal root ganglion (DRG) neurons (13.6%); predominantly small diameter DRG neurons (75%) with the remainder expressed in medium diameter DRG neurons.

The protein resides in the cell membrane. It is found in the postsynaptic cell membrane. It catalyses the reaction Ca(2+)(in) = Ca(2+)(out). The catalysed reaction is Na(+)(in) = Na(+)(out). Cold receptor activity activated by temperatures between 10-19 degrees Celsius. Ionotropic glutamate receptor that functions as a cation-permeable ligand-gated ion channel, gated by L-glutamate and the glutamatergic agonist kainic acid. L-glutamate acts as an excitatory neurotransmitter at many synapses in the central nervous system. Binding of the excitatory neurotransmitter L-glutamate induces a conformation change, leading to the opening of the cation channel, and thereby converts the chemical signal to an electrical impulse. The receptor then desensitizes rapidly and enters a transient inactive state, characterized by the presence of bound agonist. Modulates cell surface expression of NETO2. In association with GRIK3, involved in presynaptic facilitation of glutamate release at hippocampal mossy fiber synapses. Its function is as follows. Independent of its ionotropic glutamate receptor activity, acts as a thermoreceptor conferring sensitivity to cold temperatures. Functions in dorsal root ganglion neurons. Functionally, ionotropic glutamate receptor that functions as a cation-permeable ligand-gated ion channel, gated by L-glutamate and the glutamatergic agonist kainic acid. The protein is Glutamate receptor ionotropic, kainate 2 (Grik2) of Mus musculus (Mouse).